We begin with the raw amino-acid sequence, 540 residues long: Sterol O-acyltransferase 1 (540 aa).

The segment at 1–20 (MSLRNRLSKSGENPEQDEAQ) is disordered. The Cytoplasmic segment spans residues 1–128 (MSLRNRLSKS…LDELFEVDHI (128 aa)). Phosphoserine is present on S2. H127 contacts cholesterol. A helical membrane pass occupies residues 129 to 150 (RTIYHMFIALLILFVLSTIVVD). The Lumenal portion of the chain corresponds to 151-170 (YIDEGRLVLEFNLLAYAFGK). The helical transmembrane segment at 171–196 (FPTVIWTWWAMFLSTLSIPYFLFQRW) threads the bilayer. Residues 197 to 208 (AHGYSKSSHPLI) lie on the Cytoplasmic side of the membrane. A helical transmembrane segment spans residues 209-234 (YSLVHGLLFLVFQLGVLGFVPTYVVL). The Lumenal portion of the chain corresponds to 235 to 242 (AYTLPPAS). The chain crosses the membrane as a helical span at residues 243 to 266 (RFILILEQIRLIMKAHSFVRENIP). The Cytoplasmic segment spans residues 267–309 (RVLNAAKEKSSKDPLPTVNQYLYFLFAPTLIYRDNYPRTPTVR). Residues 310 to 342 (WGYVAMQFLQVFGCLFYVYYIFERLCAPLFRNI) traverse the membrane as a helical segment. Topologically, residues 343–359 (KQEPFSARVLVLCVFNS) are lumenal. A helical membrane pass occupies residues 360-385 (ILPGVLILFLSFFAFLHCWLNAFAEM). The Cytoplasmic portion of the chain corresponds to 386 to 433 (LRFGDRMFYKDWWNSTSYSNYYRTWNVVVHDWLYYYVYKDLLWFFSKR). An FYXDWWN motif motif is present at residues 393-399 (FYKDWWN). Positions 405, 408, 411, 415, 423, 435, and 446 each coordinate an acyl-CoA. A helical membrane pass occupies residues 434–458 (FKSAAMLAVFALSAVVHEYALAICL). The active site involves H450. At 459–464 (SYFYPV) the chain is on the lumenal side. Residues 465–480 (LFVLFMFFGMAFNFIV) traverse the membrane as a helical segment. Residues 481–486 (NDSRKR) lie on the Cytoplasmic side of the membrane. Residues 487–518 (PIWNIMVWASLFLGYGLILCFYSQEWYARQHC) traverse the membrane as a helical segment. A disulfide bridge links C518 with C536. Residues 519–540 (PLKNPTFLDYVRPRTWTCRYVF) lie on the Lumenal side of the membrane.

This sequence belongs to the membrane-bound acyltransferase family. Sterol o-acyltransferase subfamily. May form homo- or heterodimers. Interacts with UBIAD1.

Its subcellular location is the endoplasmic reticulum membrane. The enzyme catalyses a sterol + a long-chain fatty acyl-CoA = a long-chain 3-hydroxysterol ester + CoA. It carries out the reaction cholesterol + an acyl-CoA = a cholesterol ester + CoA. The catalysed reaction is cholesterol + (9Z)-octadecenoyl-CoA = cholesteryl (9Z-octadecenoate) + CoA. It catalyses the reaction cholesterol + hexadecanoyl-CoA = cholesteryl hexadecanoate + CoA. The enzyme catalyses octadecanoyl-CoA + cholesterol = cholesteryl octadecanoate + CoA. It carries out the reaction (9Z,12Z)-octadecadienoyl-CoA + cholesterol = cholesteryl (9Z,12Z)-octadecadienoate + CoA. The catalysed reaction is (5Z,8Z,11Z,14Z)-eicosatetraenoyl-CoA + cholesterol = cholesteryl (5Z,8Z,11Z,14Z)-eicosatetraenoate + CoA. It catalyses the reaction (9Z)-hexadecenoyl-CoA + cholesterol = cholesteryl (9Z)-hexadecenoate + CoA. The enzyme catalyses (11Z)-octadecenoyl-CoA + cholesterol = cholesteryl (11Z)-octadecenoate + CoA. It carries out the reaction (7Z)-octadecenoyl-CoA + cholesterol = cholesteryl (7Z)-octadecenoate + CoA. Its function is as follows. Catalyzes the formation of fatty acid-cholesterol esters, which are less soluble in membranes than cholesterol. Plays a role in lipoprotein assembly and dietary cholesterol absorption. Preferentially utilizes oleoyl-CoA ((9Z)-octadecenoyl-CoA) as a substrate: shows a higher activity towards an acyl-CoA substrate with a double bond at the delta-9 position (9Z) than towards saturated acyl-CoA or an unsaturated acyl-CoA with a double bond at the delta-7 (7Z) or delta-11 (11Z) positions. The polypeptide is Sterol O-acyltransferase 1 (Mus musculus (Mouse)).